Here is a 189-residue protein sequence, read N- to C-terminus: Probable nicotinate-nucleotide adenylyltransferase (189 aa).

The protein belongs to the NadD family.

It carries out the reaction nicotinate beta-D-ribonucleotide + ATP + H(+) = deamido-NAD(+) + diphosphate. Its pathway is cofactor biosynthesis; NAD(+) biosynthesis; deamido-NAD(+) from nicotinate D-ribonucleotide: step 1/1. In terms of biological role, catalyzes the reversible adenylation of nicotinate mononucleotide (NaMN) to nicotinic acid adenine dinucleotide (NaAD). In Hydrogenobaculum sp. (strain Y04AAS1), this protein is Probable nicotinate-nucleotide adenylyltransferase.